The primary structure comprises 667 residues: Holliday junction recognition protein (667 aa).

The disordered stretch occupies residues 78 to 126; it reads LNGQAPEGDSESSGADTSLEENWPSCSSAMREASGDPRQRQPAVPGNTL. Ser169, Ser185, and Ser195 each carry phosphoserine. Disordered regions lie at residues 181-201 and 279-317; these read ISAK…GQGP and RRRP…EPGK. Residues 279 to 297 show a composition bias toward basic residues; the sequence is RRRPSRKQGLHKNRTHCPR. 4 positions are modified to phosphoserine: Ser388, Ser424, Ser449, and Ser462. The interval 443 to 530 is disordered; sequence YRSGSKSPGS…NSEPTGKAVW (88 aa). The segment covering 466–482 has biased composition (basic and acidic residues); the sequence is GREKTERPGEALEDLRG. Residues 496–515 are compositionally biased toward low complexity; sequence SCPSPEGSPSRSPSHSQLSS. A Glycyl lysine isopeptide (Lys-Gly) (interchain with G-Cter in SUMO2) cross-link involves residue Lys554. Position 567 is a phosphoserine (Ser567). Positions 596-617 are disordered; it reads KRLNPDSPQQSSQKRSISPGCH. A compositionally biased stretch (polar residues) spans 601-611; the sequence is DSPQQSSQKRS. At Ser613 the chain carries Phosphoserine.

As to quaternary structure, interacts with CENPA (via CATD domain); the interaction is direct and specific for CENPA since it does not interact with H3.1- or H3.3-containing nucleosomes. Heterotrimer composed of HJURP, CENPA and histone H4, where HJURP interacts with the dimer formed by CENPA and histone H4 and prevents tetramerization of CENPA and H4. Identified in a centromere complex containing histones H2A, H2B and H4, and at least CENPA, CENPB, CENPC, CENPT, CENPN, HJURP, SUPT16H, SSRP1 and RSF1. Interacts with 14-3-3 family members in a phosphorylation-dependent manner. Interacts with MSH5 and NBN.

Its subcellular location is the nucleus. The protein localises to the nucleolus. It localises to the chromosome. The protein resides in the centromere. Functionally, centromeric protein that plays a central role in the incorporation and maintenance of histone H3-like variant CENPA at centromeres. Acts as a specific chaperone for CENPA and is required for the incorporation of newly synthesized CENPA molecules into nucleosomes at replicated centromeres. Prevents CENPA-H4 tetramerization and prevents premature DNA binding by the CENPA-H4 tetramer. Directly binds Holliday junctions. The polypeptide is Holliday junction recognition protein (Hjurp) (Mus musculus (Mouse)).